The sequence spans 215 residues: UPF0502 protein PputGB1_3531 (215 aa).

It belongs to the UPF0502 family.

The sequence is that of UPF0502 protein PputGB1_3531 from Pseudomonas putida (strain GB-1).